Reading from the N-terminus, the 563-residue chain is PTS system fructose-specific EIIB'BC component (563 aa).

2 PTS EIIB type-2 domains span residues 1-85 and 104-201; these read MKTL…KGHA and KRVV…KAVA. The active-site Phosphocysteine intermediate; for EIIB activity is the cysteine 112. Cysteine 112 is subject to Phosphocysteine; by EIIA. Residues 226–561 form the PTS EIIC type-2 domain; that stretch reads AYRHLLTGVS…KRPEVDAVAK (336 aa). 9 helical membrane passes run 236–256, 274–294, 304–324, 349–369, 382–402, 430–450, 463–483, 489–509, and 518–538; these read YMLPMVVAGGLCIALSFAFGI, GGSAFALMVPVLAGYIAFSIA, IGGMLAVSTGSGFIGGIIAGF, ILIIPLISSLVVGLAMIYLIG, WLQTMGTANAVLLGAILGGMM, MAAIMAAGMVPPLAMGLATMV, GKAALVLGLCFISEGAIPFAA, VLPCCIVGGALTGAISMAIGA, and LFVLLIPGAITPVLGYLVAII.

Its subcellular location is the cell inner membrane. The catalysed reaction is D-fructose(out) + N(pros)-phospho-L-histidyl-[protein] = D-fructose 1-phosphate(in) + L-histidyl-[protein]. The phosphoenolpyruvate-dependent sugar phosphotransferase system (sugar PTS), a major carbohydrate active transport system, catalyzes the phosphorylation of incoming sugar substrates concomitantly with their translocation across the cell membrane. The enzyme II FruAB PTS system is involved in fructose transport. This chain is PTS system fructose-specific EIIB'BC component, found in Escherichia coli (strain K12).